We begin with the raw amino-acid sequence, 373 residues long: CXADR-like membrane protein (373 aa).

Residues 1 to 17 (MSLFFLWLVSYYVGTLG) form the signal peptide. Ig-like C2-type domains are found at residues 18–126 (THTE…VILK) and 134–223 (PKCE…VRVT). Over 18–234 (THTEIKRVAE…QYVQSIGMVA (217 aa)) the chain is Extracellular. 2 disulfide bridges follow: cysteine 34–cysteine 110 and cysteine 152–cysteine 207. Residues asparagine 73 and asparagine 196 are each glycosylated (N-linked (GlcNAc...) asparagine). A helical transmembrane segment spans residues 235–255 (GAVTGIVAGALLIFLLIWLLI). Residues 256 to 373 (RRKSKDRYEE…PSQSKAFQTV (118 aa)) are Cytoplasmic-facing. Over residues 263 to 280 (YEEEDRPNEIREDAEAPR) the composition is skewed to basic and acidic residues. Residues 263 to 373 (YEEEDRPNEI…PSQSKAFQTV (111 aa)) are disordered. Composition is skewed to low complexity over residues 287–313 (SSSSSGSRSSRSGSSSTRSTGNSASRS), 321–332 (AAPQQPGLAPQA), and 353–363 (LTKAETTLSTT). Residues 364 to 373 (PSQSKAFQTV) show a composition bias toward polar residues.

Predominantly expressed in epithelial cells within different tissues and in the white adipose tissue. Expressed at high levels in the heart and brain, at intermediate levels in the lung, skeletal muscle, kidney and testis and at low levels in the liver and spleen.

The protein localises to the cell junction. The protein resides in the tight junction. Its subcellular location is the cell membrane. Functionally, may be involved in the cell-cell adhesion. May play a role in adipocyte differentiation and development of obesity. Is required for normal small intestine development. In Mus musculus (Mouse), this protein is CXADR-like membrane protein (Clmp).